The chain runs to 536 residues: Light-independent protochlorophyllide reductase subunit B (536 aa).

Residue aspartate 36 coordinates [4Fe-4S] cluster. The Proton donor role is filled by aspartate 292. 427–428 contacts substrate; the sequence is GL. Residues 448–469 show a composition bias toward low complexity; it reads SHLGHLGGHQSQTEQQQSQAAT. A disordered region spans residues 448-489; the sequence is SHLGHLGGHQSQTEQQQSQAATNPSTQSNADSSSEESPLWTP. Residues 470-483 show a composition bias toward polar residues; it reads NPSTQSNADSSSEE.

This sequence belongs to the ChlB/BchB/BchZ family. Protochlorophyllide reductase is composed of three subunits; ChlL, ChlN and ChlB. Forms a heterotetramer of two ChlB and two ChlN subunits. [4Fe-4S] cluster serves as cofactor.

The enzyme catalyses chlorophyllide a + oxidized 2[4Fe-4S]-[ferredoxin] + 2 ADP + 2 phosphate = protochlorophyllide a + reduced 2[4Fe-4S]-[ferredoxin] + 2 ATP + 2 H2O. It functions in the pathway porphyrin-containing compound metabolism; chlorophyll biosynthesis (light-independent). Component of the dark-operative protochlorophyllide reductase (DPOR) that uses Mg-ATP and reduced ferredoxin to reduce ring D of protochlorophyllide (Pchlide) to form chlorophyllide a (Chlide). This reaction is light-independent. The NB-protein (ChlN-ChlB) is the catalytic component of the complex. The sequence is that of Light-independent protochlorophyllide reductase subunit B from Prochlorococcus marinus (strain MIT 9313).